Reading from the N-terminus, the 179-residue chain is MDVFGRGRAATADDYRRFLERNSRAAAKLAAATTPTHTASSRQQPEVSARPRHRSLSSRRNSVPHYDPHAGAGGDGQLALSERPSGTLGALAMAAQRRKSIGRPDTPVNAAMGSALRSSQRPRGDVRNPRGEGQTQRGGSRGEANHAQRRQSVTQSTAARQTQPHQGRPRPRRNTLRHM.

Over residues 26–39 the composition is skewed to low complexity; sequence AAKLAAATTPTHTA. Residues 26 to 179 are disordered; that stretch reads AAKLAAATTP…RPRRNTLRHM (154 aa). Residues 150–165 are compositionally biased toward polar residues; the sequence is RQSVTQSTAARQTQPH. The segment covering 167 to 179 has biased composition (basic residues); that stretch reads GRPRPRRNTLRHM.

This is an uncharacterized protein from Equus caballus (Horse).